A 271-amino-acid chain; its full sequence is Metal-staphylopine import system ATP-binding protein CntD (271 aa).

The ABC transporter domain maps to 6–251; that stretch reads VKHLTITDTW…PEHVYTKYLL (246 aa). An ATP-binding site is contributed by 38–45; it reads GESGSGKS.

It belongs to the ABC transporter superfamily. In terms of assembly, the complex is composed of two ATP-binding proteins (CntD and CntF), two transmembrane proteins (CntB and CntC) and a solute-binding protein (CntA).

It is found in the cell membrane. Functionally, part of the ABC transporter complex CntABCDF (Opp1) involved in the uptake of metal in complex with the metallophore staphylopine (StP). May be involved in the import of a large array of divalent metals ions such as nickel, cobalt, zinc, copper and iron. Probably responsible for energy coupling to the transport system. The polypeptide is Metal-staphylopine import system ATP-binding protein CntD (Staphylococcus aureus (strain Mu50 / ATCC 700699)).